The chain runs to 125 residues: UPF0389 protein CG9231 (125 aa).

Residues 69-88 (IRLANIMIALTAVGCAIMVY) form a helical membrane-spanning segment. Asn112 is a glycosylation site (N-linked (GlcNAc...) asparagine).

It belongs to the UPF0389 family.

It localises to the membrane. In Drosophila melanogaster (Fruit fly), this protein is UPF0389 protein CG9231.